The primary structure comprises 1386 residues: X-linked retinitis pigmentosa GTPase regulator homolog (1386 aa).

Disordered stretches follow at residues 1–25 (MFFK…TSSE), 37–56 (AGAR…KARR), and 730–760 (MPQM…PEQH). Positions 9–25 (SRKTSANSSSDTSTSSE) are enriched in low complexity. Residues 45–56 (SVHRQSGKKARR) are compositionally biased toward basic residues. 4 RCC1 repeats span residues 737–787 (SKRS…VLSS), 788–838 (SGQL…FICS), 839–891 (DGSL…VLTD), and 893–943 (GRVL…CITE). A disordered region spans residues 972–994 (LKNTEDPSSPSPSTNGSTPRVNL). 2 RCC1 repeats span residues 1034-1085 (EGTL…ASTD) and 1087-1139 (GSVF…FVQK).

In terms of biological role, could be a guanine-nucleotide releasing factor for glo-1. May play a role in gut granule biogenesis. Regulates axon termination in PLM and ALM neurons. The protein is X-linked retinitis pigmentosa GTPase regulator homolog (glo-4) of Caenorhabditis elegans.